The sequence spans 141 residues: Meiotically up-regulated gene 118 protein (141 aa).

Polar residues predominate over residues 106–115 (LSSQKSARQP). The segment at 106-141 (LSSQKSARQPTKTVASSSSSSSKSTTVSKSSSKSQV) is disordered. Over residues 116 to 141 (TKTVASSSSSSSKSTTVSKSSSKSQV) the composition is skewed to low complexity.

The protein resides in the nucleus. In terms of biological role, has a role in meiosis. In Schizosaccharomyces pombe (strain 972 / ATCC 24843) (Fission yeast), this protein is Meiotically up-regulated gene 118 protein (mug118).